The following is a 360-amino-acid chain: Photosystem II protein D1 (360 aa).

The next 3 membrane-spanning stretches (helical) occupy residues 29-46 (YIGW…TAAS), 118-133 (HFLI…EWEL), and 142-156 (WIFV…AASA). H118 contacts chlorophyll a. W126 lines the pheophytin a pocket. [CaMn4O5] cluster contacts are provided by D170 and E189. A helical transmembrane segment spans residues 197 to 218 (FHMAGVAGVFGGSLFSAMHGSL). H198 lines the chlorophyll a pocket. Residues H215 and 264–265 (SF) contribute to the a quinone site. Residue H215 participates in Fe cation binding. H272 lines the Fe cation pocket. A helical transmembrane segment spans residues 274 to 288 (FLAAWPVVGIWLTAL). The [CaMn4O5] cluster site is built by H332, E333, D342, and A344. The propeptide occupies 345–360 (SNEILPVAISAPSVVG).

Belongs to the reaction center PufL/M/PsbA/D family. PSII is composed of 1 copy each of membrane proteins PsbA, PsbB, PsbC, PsbD, PsbE, PsbF, PsbH, PsbI, PsbJ, PsbK, PsbL, PsbM, PsbT, PsbX, PsbY, PsbZ, Psb30/Ycf12, at least 3 peripheral proteins of the oxygen-evolving complex and a large number of cofactors. It forms dimeric complexes. The D1/D2 heterodimer binds P680, chlorophylls that are the primary electron donor of PSII, and subsequent electron acceptors. It shares a non-heme iron and each subunit binds pheophytin, quinone, additional chlorophylls, carotenoids and lipids. D1 provides most of the ligands for the Mn4-Ca-O5 cluster of the oxygen-evolving complex (OEC). There is also a Cl(-1) ion associated with D1 and D2, which is required for oxygen evolution. The PSII complex binds additional chlorophylls, carotenoids and specific lipids. is required as a cofactor. Tyr-161 forms a radical intermediate that is referred to as redox-active TyrZ, YZ or Y-Z. Post-translationally, C-terminally processed by CTPA; processing is essential to allow assembly of the oxygen-evolving complex and thus photosynthetic growth.

It is found in the plastid. Its subcellular location is the chloroplast thylakoid membrane. It catalyses the reaction 2 a plastoquinone + 4 hnu + 2 H2O = 2 a plastoquinol + O2. Functionally, photosystem II (PSII) is a light-driven water:plastoquinone oxidoreductase that uses light energy to abstract electrons from H(2)O, generating O(2) and a proton gradient subsequently used for ATP formation. It consists of a core antenna complex that captures photons, and an electron transfer chain that converts photonic excitation into a charge separation. The D1/D2 (PsbA/PsbD) reaction center heterodimer binds P680, the primary electron donor of PSII as well as several subsequent electron acceptors. In Ectocarpus siliculosus (Brown alga), this protein is Photosystem II protein D1.